A 165-amino-acid polypeptide reads, in one-letter code: Protein SprT (165 aa).

In terms of domain architecture, SprT-like spans 20 to 163 (EKLAQANLKL…RCVHCGEQLV (144 aa)). Histidine 78 contributes to the Zn(2+) binding site. Glutamate 79 is a catalytic residue. Zn(2+) is bound at residue histidine 82.

Belongs to the SprT family. Zn(2+) serves as cofactor.

The protein resides in the cytoplasm. In Shigella sonnei (strain Ss046), this protein is Protein SprT.